The primary structure comprises 392 residues: ATP phosphoribosyltransferase regulatory subunit (392 aa).

It belongs to the class-II aminoacyl-tRNA synthetase family. HisZ subfamily. Heteromultimer composed of HisG and HisZ subunits.

It localises to the cytoplasm. The protein operates within amino-acid biosynthesis; L-histidine biosynthesis; L-histidine from 5-phospho-alpha-D-ribose 1-diphosphate: step 1/9. Its function is as follows. Required for the first step of histidine biosynthesis. May allow the feedback regulation of ATP phosphoribosyltransferase activity by histidine. This chain is ATP phosphoribosyltransferase regulatory subunit, found in Synechococcus sp. (strain CC9902).